A 570-amino-acid chain; its full sequence is Vacuolar protein sorting-associated protein 45 (570 aa).

2 positions are modified to phosphoserine: Ser-307 and Ser-441.

Belongs to the STXBP/unc-18/SEC1 family. As to quaternary structure, interacts with ZFYVE20. Interacts with STX6.

It is found in the golgi apparatus membrane. The protein resides in the endosome membrane. In terms of biological role, may play a role in vesicle-mediated protein trafficking from the Golgi stack through the trans-Golgi network. The sequence is that of Vacuolar protein sorting-associated protein 45 (Vps45) from Mus musculus (Mouse).